Here is a 43-residue protein sequence, read N- to C-terminus: Photosystem II reaction center protein Psb30 (43 aa).

A helical membrane pass occupies residues 15 to 35 (VIFQLTFVSLILISGPVVIFL).

Belongs to the Psb30/Ycf12 family. As to quaternary structure, PSII is composed of 1 copy each of membrane proteins PsbA, PsbB, PsbC, PsbD, PsbE, PsbF, PsbH, PsbI, PsbJ, PsbK, PsbL, PsbM, PsbT, PsbX, PsbY, PsbZ, Psb30/Ycf12, peripheral proteins PsbO, CyanoQ (PsbQ), PsbU, PsbV and a large number of cofactors. It forms dimeric complexes.

It is found in the cellular thylakoid membrane. Its function is as follows. A core subunit of photosystem II (PSII), probably helps stabilize the reaction center. The chain is Photosystem II reaction center protein Psb30 from Picosynechococcus sp. (strain ATCC 27264 / PCC 7002 / PR-6) (Agmenellum quadruplicatum).